The primary structure comprises 439 residues: MPTVLIVGKSNVGKSTLFNKLIGYKKSIVDDKEGVTRDAVSGRVSYYSKTFNIVDTGGIFENPEDDIINKSKDLTLKMLNEADLILFVIDAKNGITSEDYYLADIIRKSNNDVILVSNKSESERRVQNNLPDIYKLGFGDPIFVSAEQGKNIDTLIERIVNVLESKGLSLEENLKEESQSIIRVSFIGRPNAGKSTLFNSILNKERVLVTPIPGTTRDSVDELVTINGRKYLFVDTAGLRRKSKVDYKSLDMYSNVRSIKSIENSDVVVILIDAIEGITHQDQRIAGIAENRGKATIVAFNKIDLIKNFKYKKEEFIDQFNEKLYFINYSPLIFLSAINKKGIDNLINAIDEAYKSLHYRVQTSAVNSAIQRMMAFTPPPKGLKILYGTQVDIRPPTFLFFTNGKKVPEFYQNHIRKTIRENIYPFVGAPIFLKFKSRH.

EngA-type G domains lie at 2-167 and 182-358; these read PTVL…ESKG and IRVS…KSLH. Residues 8–15, 55–59, 118–121, 188–195, 235–239, and 301–304 each bind GTP; these read GKSNVGKS, DTGGI, NKSE, GRPNAGKS, DTAGL, and NKID. Residues 359–439 form the KH-like domain; it reads YRVQTSAVNS…PIFLKFKSRH (81 aa).

The protein belongs to the TRAFAC class TrmE-Era-EngA-EngB-Septin-like GTPase superfamily. EngA (Der) GTPase family. As to quaternary structure, associates with the 50S ribosomal subunit.

GTPase that plays an essential role in the late steps of ribosome biogenesis. This chain is GTPase Der, found in Thermosipho africanus (strain TCF52B).